Consider the following 340-residue polypeptide: Ribonucleoside-diphosphate reductase subunit beta (340 aa).

Fe cation-binding residues include Asp-88 and His-122. Residue Tyr-126 is part of the active site. Fe cation is bound at residue His-216.

The protein belongs to the ribonucleoside diphosphate reductase small chain family. Tetramer of two alpha and two beta subunits. Requires Fe cation as cofactor.

It catalyses the reaction a 2'-deoxyribonucleoside 5'-diphosphate + [thioredoxin]-disulfide + H2O = a ribonucleoside 5'-diphosphate + [thioredoxin]-dithiol. Its function is as follows. Provides the precursors necessary for DNA synthesis. Catalyzes the biosynthesis of deoxyribonucleotides from the corresponding ribonucleotides. The chain is Ribonucleoside-diphosphate reductase subunit beta (nrdF) from Mycoplasma genitalium (strain ATCC 33530 / DSM 19775 / NCTC 10195 / G37) (Mycoplasmoides genitalium).